The following is a 63-amino-acid chain: Sec-independent protein translocase protein TatA (63 aa).

The chain crosses the membrane as a helical span at residues 1 to 21 (MGSFSMWHWLIVLVIVLLLFG). The disordered stretch occupies residues 42–63 (GMTDEDAPDTAKTVDHKADETK). Residues 53–63 (KTVDHKADETK) show a composition bias toward basic and acidic residues.

It belongs to the TatA/E family. The Tat system comprises two distinct complexes: a TatABC complex, containing multiple copies of TatA, TatB and TatC subunits, and a separate TatA complex, containing only TatA subunits. Substrates initially bind to the TatABC complex, which probably triggers association of the separate TatA complex to form the active translocon.

The protein resides in the cell inner membrane. Functionally, part of the twin-arginine translocation (Tat) system that transports large folded proteins containing a characteristic twin-arginine motif in their signal peptide across membranes. TatA could form the protein-conducting channel of the Tat system. This chain is Sec-independent protein translocase protein TatA, found in Rhizobium leguminosarum bv. trifolii (strain WSM2304).